A 739-amino-acid chain; its full sequence is Phosphoribosylformylglycinamidine synthase subunit PurL (739 aa).

The active site involves His-54. ATP is bound by residues Tyr-57 and Lys-96. Glu-98 contributes to the Mg(2+) binding site. Substrate-binding positions include 99-102 (SHNH) and Arg-121. Catalysis depends on His-100, which acts as the Proton acceptor. A Mg(2+)-binding site is contributed by Asp-122. Gln-245 lines the substrate pocket. Asp-273 contacts Mg(2+). Position 317 to 319 (317 to 319 (ESQ)) interacts with substrate. ATP contacts are provided by Asp-500 and Gly-537. Asn-538 is a Mg(2+) binding site. Ser-540 is a binding site for substrate.

This sequence belongs to the FGAMS family. Monomer. Part of the FGAM synthase complex composed of 1 PurL, 1 PurQ and 2 PurS subunits.

It localises to the cytoplasm. It catalyses the reaction N(2)-formyl-N(1)-(5-phospho-beta-D-ribosyl)glycinamide + L-glutamine + ATP + H2O = 2-formamido-N(1)-(5-O-phospho-beta-D-ribosyl)acetamidine + L-glutamate + ADP + phosphate + H(+). It participates in purine metabolism; IMP biosynthesis via de novo pathway; 5-amino-1-(5-phospho-D-ribosyl)imidazole from N(2)-formyl-N(1)-(5-phospho-D-ribosyl)glycinamide: step 1/2. In terms of biological role, part of the phosphoribosylformylglycinamidine synthase complex involved in the purines biosynthetic pathway. Catalyzes the ATP-dependent conversion of formylglycinamide ribonucleotide (FGAR) and glutamine to yield formylglycinamidine ribonucleotide (FGAM) and glutamate. The FGAM synthase complex is composed of three subunits. PurQ produces an ammonia molecule by converting glutamine to glutamate. PurL transfers the ammonia molecule to FGAR to form FGAM in an ATP-dependent manner. PurS interacts with PurQ and PurL and is thought to assist in the transfer of the ammonia molecule from PurQ to PurL. This chain is Phosphoribosylformylglycinamidine synthase subunit PurL, found in Bacillus cereus (strain ATCC 14579 / DSM 31 / CCUG 7414 / JCM 2152 / NBRC 15305 / NCIMB 9373 / NCTC 2599 / NRRL B-3711).